Reading from the N-terminus, the 88-residue chain is Antitoxin VapB21 (88 aa).

In terms of biological role, antitoxin component of a type II toxin-antitoxin (TA) system. In Mycobacterium tuberculosis (strain CDC 1551 / Oshkosh), this protein is Antitoxin VapB21 (vapB21).